Consider the following 56-residue polypeptide: Small ribosomal subunit protein uS14 (56 aa).

Zn(2+) is bound by residues Cys21, Cys24, Cys39, and Cys42.

It belongs to the universal ribosomal protein uS14 family. It depends on Zn(2+) as a cofactor.

This is Small ribosomal subunit protein uS14 (RPS29) from Debaryomyces hansenii (strain ATCC 36239 / CBS 767 / BCRC 21394 / JCM 1990 / NBRC 0083 / IGC 2968) (Yeast).